A 457-amino-acid chain; its full sequence is Arginine biosynthesis bifunctional protein ArgJ, mitochondrial (457 aa).

Substrate contacts are provided by Thr-184, Lys-213, Thr-224, Glu-312, Asn-452, and Thr-457. Thr-224 functions as the Nucleophile in the catalytic mechanism.

It belongs to the ArgJ family. In terms of assembly, heterodimer of an alpha and a beta chain. Post-translationally, the alpha and beta chains are autoproteolytically processed from a single precursor protein within the mitochondrion.

The protein resides in the mitochondrion matrix. It catalyses the reaction N(2)-acetyl-L-ornithine + L-glutamate = N-acetyl-L-glutamate + L-ornithine. The enzyme catalyses L-glutamate + acetyl-CoA = N-acetyl-L-glutamate + CoA + H(+). The protein operates within amino-acid biosynthesis; L-arginine biosynthesis; L-ornithine and N-acetyl-L-glutamate from L-glutamate and N(2)-acetyl-L-ornithine (cyclic): step 1/1. It participates in amino-acid biosynthesis; L-arginine biosynthesis; N(2)-acetyl-L-ornithine from L-glutamate: step 1/4. Its function is as follows. Catalyzes two activities which are involved in the cyclic version of arginine biosynthesis: the synthesis of acetylglutamate from glutamate and acetyl-CoA, and of ornithine by transacetylation between acetylornithine and glutamate. This chain is Arginine biosynthesis bifunctional protein ArgJ, mitochondrial, found in Aspergillus terreus (strain NIH 2624 / FGSC A1156).